The chain runs to 312 residues: Methionyl-tRNA formyltransferase (312 aa).

(6S)-5,6,7,8-tetrahydrofolate is bound at residue 109–112 (SLLP).

The protein belongs to the Fmt family.

The enzyme catalyses L-methionyl-tRNA(fMet) + (6R)-10-formyltetrahydrofolate = N-formyl-L-methionyl-tRNA(fMet) + (6S)-5,6,7,8-tetrahydrofolate + H(+). Functionally, attaches a formyl group to the free amino group of methionyl-tRNA(fMet). The formyl group appears to play a dual role in the initiator identity of N-formylmethionyl-tRNA by promoting its recognition by IF2 and preventing the misappropriation of this tRNA by the elongation apparatus. The chain is Methionyl-tRNA formyltransferase from Listeria monocytogenes serovar 1/2a (strain ATCC BAA-679 / EGD-e).